Reading from the N-terminus, the 431-residue chain is Glucose-1-phosphate adenylyltransferase (431 aa).

Beta-D-fructose 1,6-bisphosphate is bound at residue lysine 39. Residues arginine 40, histidine 46, and arginine 52 each coordinate AMP. Tyrosine 114 is an alpha-D-glucose 1-phosphate binding site. Arginine 130 contacts AMP. Alpha-D-glucose 1-phosphate contacts are provided by residues glycine 179, 194-195, and serine 212; that span reads EK. The AMP site is built by glutamate 370 and arginine 386. Beta-D-fructose 1,6-bisphosphate contacts are provided by residues 419-423 and 429-431; these read REMLR and QER.

This sequence belongs to the bacterial/plant glucose-1-phosphate adenylyltransferase family. In terms of assembly, homotetramer.

It catalyses the reaction alpha-D-glucose 1-phosphate + ATP + H(+) = ADP-alpha-D-glucose + diphosphate. It functions in the pathway glycan biosynthesis; glycogen biosynthesis. Allosterically activated by fructose-1,6-bisphosphate (F16BP) and inhibited by AMP. In terms of biological role, involved in the biosynthesis of ADP-glucose, a building block required for the elongation reactions to produce glycogen. Catalyzes the reaction between ATP and alpha-D-glucose 1-phosphate (G1P) to produce pyrophosphate and ADP-Glc. This is Glucose-1-phosphate adenylyltransferase from Shigella dysenteriae serotype 1 (strain Sd197).